The following is a 172-amino-acid chain: Adenine phosphoribosyltransferase (172 aa).

Belongs to the purine/pyrimidine phosphoribosyltransferase family. As to quaternary structure, homodimer.

The protein localises to the cytoplasm. The catalysed reaction is AMP + diphosphate = 5-phospho-alpha-D-ribose 1-diphosphate + adenine. The protein operates within purine metabolism; AMP biosynthesis via salvage pathway; AMP from adenine: step 1/1. Functionally, catalyzes a salvage reaction resulting in the formation of AMP, that is energically less costly than de novo synthesis. This chain is Adenine phosphoribosyltransferase, found in Pediococcus pentosaceus (strain ATCC 25745 / CCUG 21536 / LMG 10740 / 183-1w).